We begin with the raw amino-acid sequence, 452 residues long: Pup--protein ligase (452 aa).

Glutamate 9 serves as a coordination point for Mg(2+). Arginine 53 contacts ATP. Tyrosine 55 is a binding site for Mg(2+). Aspartate 57 functions as the Proton acceptor in the catalytic mechanism. Glutamate 63 is a binding site for Mg(2+). Residues threonine 66 and tryptophan 419 each coordinate ATP.

It belongs to the Pup ligase/Pup deamidase family. Pup-conjugating enzyme subfamily.

It catalyses the reaction ATP + [prokaryotic ubiquitin-like protein]-L-glutamate + [protein]-L-lysine = ADP + phosphate + N(6)-([prokaryotic ubiquitin-like protein]-gamma-L-glutamyl)-[protein]-L-lysine.. It participates in protein degradation; proteasomal Pup-dependent pathway. The protein operates within protein modification; protein pupylation. In terms of biological role, catalyzes the covalent attachment of the prokaryotic ubiquitin-like protein modifier Pup to the proteasomal substrate proteins, thereby targeting them for proteasomal degradation. This tagging system is termed pupylation. The ligation reaction involves the side-chain carboxylate of the C-terminal glutamate of Pup and the side-chain amino group of a substrate lysine. The chain is Pup--protein ligase from Salinispora arenicola (strain CNS-205).